Reading from the N-terminus, the 398-residue chain is MYLTKEEEQILNGEAGETLRQAIQILVALGDIYGADRLIPIKSAQIAGVSYKTIGDAGLEWISDLEGQVKVPAILNPAGMDLEDWERLRISPEFAEKQKEIVQAYKKLGIRCECTCTPYTLEGFSVSYGDHLAWSESSAISYANSVIGARTNREGGPSALSAALLGKTANYGFHLDKNRVPEVSVSVECSLKESDYGALGYVAGKLIGNRVPIFQLRSKPEKDELKSLGAAMAASGAVALYHVKGVTPEACRMDFEEPEEKIIIERSQLDEVYESKGKEPELITIGCPHCSAAELKKAAELLKGKTVSKETWIFTSRELAERYPEYIRTIEESGAKVVCDTCMVVSPATNSYSCVMVNSGKAFAYVPGMCGAQSVYGNMEACINKATGGKERKAGDSH.

(R)-5-phosphomevalonate contacts are provided by G48, V49, S50, N76, and P77. Residue C116 coordinates [4Fe-4S] cluster. The (R)-5-phosphomevalonate site is built by E136 and S137. Positions 287 and 342 each coordinate [4Fe-4S] cluster. A (R)-5-phosphomevalonate-binding site is contributed by K361.

It belongs to the AcnX type II large subunit family. Heterodimer composed of a large subunit (PMDh-L) and a small subunit (PMDh-S). [4Fe-4S] cluster is required as a cofactor.

It carries out the reaction (R)-5-phosphomevalonate = (2E)-3-methyl-5-phosphooxypent-2-enoate + H2O. It functions in the pathway isoprenoid biosynthesis; isopentenyl diphosphate biosynthesis via mevalonate pathway. Component of a hydro-lyase that catalyzes the dehydration of mevalonate 5-phosphate (MVA5P) to form trans-anhydromevalonate 5-phosphate (tAHMP). Involved in the archaeal mevalonate (MVA) pathway, which provides fundamental precursors for isoprenoid biosynthesis, such as isopentenyl diphosphate (IPP) and dimethylallyl diphosphate (DMAPP). The chain is Phosphomevalonate dehydratase large subunit from Methanosarcina mazei (strain ATCC BAA-159 / DSM 3647 / Goe1 / Go1 / JCM 11833 / OCM 88) (Methanosarcina frisia).